The sequence spans 710 residues: Bifunctional lysine-specific demethylase and histidyl-hydroxylase NO66 (710 aa).

The tract at residues 103 to 137 (TDEMNKTKKKQKKIMKKEIRKRTKRKRKSVNKREL) is disordered. Residues 109–132 (TKKKQKKIMKKEIRKRTKRKRKSV) show a composition bias toward basic residues. Residues 359 to 506 (CSIQLTNPQS…DLLERVIPPA (148 aa)) form the JmjC domain. The Fe cation site is built by His-405, Asp-407, and His-472.

This sequence belongs to the ROX family. NO66 subfamily. Requires Fe(2+) as cofactor.

Its subcellular location is the nucleus. It carries out the reaction N(6),N(6)-dimethyl-L-lysyl(36)-[histone H3] + 2 2-oxoglutarate + 2 O2 = L-lysyl(36)-[histone H3] + 2 formaldehyde + 2 succinate + 2 CO2. Oxygenase that can act as both a histone lysine demethylase and a ribosomal histidine hydroxylase. Specifically demethylates 'Lys-4' (H3K4me) and 'Lys-36' (H3K36me) of histone H3, thereby playing a central role in histone code. This is Bifunctional lysine-specific demethylase and histidyl-hydroxylase NO66 from Brugia malayi (Filarial nematode worm).